Reading from the N-terminus, the 459-residue chain is V-type ATP synthase beta chain (459 aa).

It belongs to the ATPase alpha/beta chains family.

Produces ATP from ADP in the presence of a proton gradient across the membrane. The V-type beta chain is a regulatory subunit. The polypeptide is V-type ATP synthase beta chain (Thermoanaerobacter sp. (strain X514)).